A 97-amino-acid chain; its full sequence is MRLSYILVVVIAVTLQACVCAIPVIKEANQVMLANGPLPSIVNTEGGRLLRGVKKRTAEREVQEERMSGAKLSEKGKQFLKWFFRGSDTRVKGRSWR.

A signal peptide spans methionine 1 to alanine 21. A RxLR-dEER motif is present at residues arginine 48 to arginine 66.

It belongs to the RxLR effector family.

It localises to the secreted. The protein resides in the host cell. Its function is as follows. Effector that is involved in host plant infection. Contributes to virulence during the early infection stage, by inhibiting plant defense responses induced by both PAMP-triggered immunity (PTI) and effector-triggered immunity (ETI). In Phytophthora infestans (strain T30-4) (Potato late blight agent), this protein is RxLR effector protein CRE10.